The sequence spans 863 residues: Bifunctional uridylyltransferase/uridylyl-removing enzyme (863 aa).

Positions 1 to 328 (MLFSPTLSSL…SSNQDTVIDQ (328 aa)) are uridylyltransferase. The uridylyl-removing stretch occupies residues 329 to 687 (LDDDFQLINQ…ISNRFSLGGT (359 aa)). The HD domain maps to 446-568 (VDEHTLRVML…MQNQVRLDYL (123 aa)). ACT domains are found at residues 688–764 (EVFI…KLPA) and 794–863 (EMEL…QQIR).

The protein belongs to the GlnD family. Mg(2+) serves as cofactor.

The catalysed reaction is [protein-PII]-L-tyrosine + UTP = [protein-PII]-uridylyl-L-tyrosine + diphosphate. It carries out the reaction [protein-PII]-uridylyl-L-tyrosine + H2O = [protein-PII]-L-tyrosine + UMP + H(+). Its activity is regulated as follows. Uridylyltransferase (UTase) activity is inhibited by glutamine, while glutamine activates uridylyl-removing (UR) activity. Modifies, by uridylylation and deuridylylation, the PII regulatory proteins (GlnB and homologs), in response to the nitrogen status of the cell that GlnD senses through the glutamine level. Under low glutamine levels, catalyzes the conversion of the PII proteins and UTP to PII-UMP and PPi, while under higher glutamine levels, GlnD hydrolyzes PII-UMP to PII and UMP (deuridylylation). Thus, controls uridylylation state and activity of the PII proteins, and plays an important role in the regulation of nitrogen assimilation and metabolism. The polypeptide is Bifunctional uridylyltransferase/uridylyl-removing enzyme (Haemophilus influenzae (strain ATCC 51907 / DSM 11121 / KW20 / Rd)).